The following is a 75-amino-acid chain: Translation initiation factor IF-1, chloroplastic (75 aa).

The S1-like domain maps to Met1–Ser72.

This sequence belongs to the IF-1 family. In terms of assembly, component of the 30S ribosomal translation pre-initiation complex which assembles on the 30S ribosome in the order IF-2 and IF-3, IF-1 and N-formylmethionyl-tRNA(fMet); mRNA recruitment can occur at any time during PIC assembly.

The protein localises to the plastid. It is found in the chloroplast. One of the essential components for the initiation of protein synthesis. Stabilizes the binding of IF-2 and IF-3 on the 30S subunit to which N-formylmethionyl-tRNA(fMet) subsequently binds. Helps modulate mRNA selection, yielding the 30S pre-initiation complex (PIC). Upon addition of the 50S ribosomal subunit IF-1, IF-2 and IF-3 are released leaving the mature 70S translation initiation complex. This Pinus koraiensis (Korean pine) protein is Translation initiation factor IF-1, chloroplastic.